The primary structure comprises 507 residues: DNA replication licensing factor MCM6 (507 aa).

An MCM domain is found at 32–239; the sequence is LYHNLCTSLF…TDYAIARRIV (208 aa). Residues His-45, Ser-85, Thr-86, Ala-87, Lys-88, Ser-89, and Asn-190 each contribute to the ATP site. The short motif at 214-217 is the Arginine finger element; that stretch reads SRFD. ADP is bound by residues Arg-305 and Glu-308. Lys-329 bears the N6-acetyllysine mark. The tract at residues 365–392 is disordered; it reads GPGGINGHADSPAPVNGFNGSGEDASQE. Phosphoserine is present on residues Ser-375, Ser-390, and Ser-448. Thr-477 is modified (phosphothreonine).

It belongs to the MCM family. In terms of assembly, component of the MCM2-7 complex. The complex forms a toroidal hexameric ring with the proposed subunit order MCM2-MCM6-MCM4-MCM7-MCM3-MCM5. Component of the CMG helicase complex, a hexameric ring of related MCM2-7 subunits stabilized by CDC45 and the tetrameric GINS complex. May interact with MCM10. Interacts with TIPIN. Interacts with CDT1. Interacts with MCMBP. Interacts with DDI2. In terms of processing, O-glycosylated (O-GlcNAcylated), in a cell cycle-dependent manner.

The protein resides in the nucleus. The protein localises to the chromosome. It catalyses the reaction ATP + H2O = ADP + phosphate + H(+). Acts as a component of the MCM2-7 complex (MCM complex) which is the replicative helicase essential for 'once per cell cycle' DNA replication initiation and elongation in eukaryotic cells. Core component of CDC45-MCM-GINS (CMG) helicase, the molecular machine that unwinds template DNA during replication, and around which the replisome is built. The active ATPase sites in the MCM2-7 ring are formed through the interaction surfaces of two neighboring subunits such that a critical structure of a conserved arginine finger motif is provided in trans relative to the ATP-binding site of the Walker A box of the adjacent subunit. The six ATPase active sites, however, are likely to contribute differentially to the complex helicase activity. The protein is DNA replication licensing factor MCM6 (Mcm6) of Rattus norvegicus (Rat).